Here is a 670-residue protein sequence, read N- to C-terminus: Auxin response factor 16 (670 aa).

A DNA-binding region (TF-B3) is located at residues 120 to 222; sequence FAKTLTQSDA…DLCVGIRRAK (103 aa). Residues 545 to 557 are compositionally biased toward polar residues; that stretch reads KTQISSGGSNQNG. The interval 545–579 is disordered; sequence KTQISSGGSNQNGVAGREFSSSDEGSPCSKKVHDA. The PB1 domain maps to 584 to 664; it reads TGHCKVFMES…RRLTILTEQG (81 aa).

This sequence belongs to the ARF family. As to quaternary structure, homodimers and heterodimers.

Its subcellular location is the nucleus. In terms of biological role, auxin response factors (ARFs) are transcriptional factors that bind specifically to the DNA sequence 5'-TGTCTC-3' found in the auxin-responsive promoter elements (AuxREs). Could act as transcriptional activator or repressor. Formation of heterodimers with Aux/IAA proteins may alter their ability to modulate early auxin response genes expression. In Arabidopsis thaliana (Mouse-ear cress), this protein is Auxin response factor 16 (ARF16).